We begin with the raw amino-acid sequence, 1063 residues long: Alkane uptake protein B (1063 aa).

The N-terminal stretch at 1–17 (MKYNKTLALIPAILLAA) is a signal peptide. A lipid anchor (N-palmitoyl cysteine) is attached at C18. The S-diacylglycerol cysteine moiety is linked to residue C18.

Interacts with the outer membrane protein AupA.

It localises to the cell inner membrane. Its function is as follows. Required for growth on alkanes. Probably involved in the uptake of micelle-solubilized alkanes. May facilitate the transfer of alkanes from the outer membrane to the inner membrane. In Marinobacter nauticus (strain ATCC 49840 / DSM 8798 / CIP 103578 / SP17) (Marinobacter hydrocarbonoclasticus), this protein is Alkane uptake protein B.